The following is a 447-amino-acid chain: FAD-dependent monooxygenase tropB (447 aa).

A helical membrane pass occupies residues 12 to 32; it reads PLSVGIVGGGIIGVILAAGLV. E42, A55, and R124 together coordinate FAD. N153 is a glycosylation site (N-linked (GlcNAc...) asparagine). Active-site residues include R206 and Y239. N243 carries N-linked (GlcNAc...) asparagine glycosylation. 2 residues coordinate FAD: D322 and A335.

The protein belongs to the paxM FAD-dependent monooxygenase family. FAD is required as a cofactor.

It localises to the membrane. It functions in the pathway secondary metabolite biosynthesis. FAD-dependent monooxygenase; part of the gene cluster that mediates the biosynthesis of the tropolone class of fungal maleic anhydrides. Within the pathway, tropB catalyzes a synthetically challenging asymmetric oxidative dearomatization reaction to convert 3-methylorcinaldehyde into a hydroxycyclohexadione. The pathway begins with the synthesis of 3-methylorcinaldehyde by the non-reducing polyketide synthase (PKS) tropA. 3-methylorcinaldehyde is the substrate for the FAD-dependent monooxygenase tropB to yield a dearomatized hydroxycyclohexadione. The 2-oxoglutarate-dependent dioxygenase tropC then performs the oxidative ring expansion to provide the first tropolone metabolite stipitaldehyde. Trop D converts stipitaldehyde into stipitacetal which is in turn converted to stipitalide by the short-chain dehydrogenase/reductase tropE. The next steps involve tropF, tropG, tropH, tropI and tropJ to form successive tropolone maleic anhydrides including stipitaldehydic, stipitatonic and stipitatic acids. This is FAD-dependent monooxygenase tropB from Talaromyces stipitatus (strain ATCC 10500 / CBS 375.48 / QM 6759 / NRRL 1006) (Penicillium stipitatum).